We begin with the raw amino-acid sequence, 417 residues long: Serine hydroxymethyltransferase 2 (417 aa).

Residues Leu-121 and 125–127 contribute to the (6S)-5,6,7,8-tetrahydrofolate site; that span reads GHL. N6-(pyridoxal phosphate)lysine is present on Lys-229. 354-356 is a binding site for (6S)-5,6,7,8-tetrahydrofolate; that stretch reads SPF.

This sequence belongs to the SHMT family. Homodimer. Requires pyridoxal 5'-phosphate as cofactor.

Its subcellular location is the cytoplasm. It catalyses the reaction (6R)-5,10-methylene-5,6,7,8-tetrahydrofolate + glycine + H2O = (6S)-5,6,7,8-tetrahydrofolate + L-serine. The protein operates within one-carbon metabolism; tetrahydrofolate interconversion. Its pathway is amino-acid biosynthesis; glycine biosynthesis; glycine from L-serine: step 1/1. Catalyzes the reversible interconversion of serine and glycine with tetrahydrofolate (THF) serving as the one-carbon carrier. This reaction serves as the major source of one-carbon groups required for the biosynthesis of purines, thymidylate, methionine, and other important biomolecules. Also exhibits THF-independent aldolase activity toward beta-hydroxyamino acids, producing glycine and aldehydes, via a retro-aldol mechanism. The sequence is that of Serine hydroxymethyltransferase 2 from Pseudomonas fluorescens (strain Pf0-1).